Here is a 722-residue protein sequence, read N- to C-terminus: Capsid protein VP1 (722 aa).

Positions 14 to 59 are phospholipase A2-like; the sequence is YLGPGNSLDQGEPTNPSDAAAKEHDEAYAAYLRSGKNPYLYFSPAD. 3 disordered regions span residues 90 to 115, 136 to 179, and 497 to 531; these read VLTD…PPPH, LAPM…VGIS, and AGRG…TTGE. Positions 161 to 178 are enriched in gly residues; that stretch reads SGNGSGGGGGGGSGGVGI.

It belongs to the parvoviridae capsid protein family.

The protein resides in the virion. Capsid protein self-assembles to form an icosahedral capsid with a T=1 symmetry, about 22 nm in diameter, and consisting of 60 copies of two size variants of the capsid proteins, VP1 and VP2, which differ by the presence of an N-terminal extension in the minor protein VP1. The capsid encapsulates the genomic ssDNA. Capsid proteins are responsible for the attachment to host cell receptors. This attachment induces virion internalization predominantly through clathrin-dependent endocytosis. Binding to the host receptors also induces capsid rearrangements leading to surface exposure of VP1 N-terminus, specifically its phospholipase A2-like region and putative nuclear localization signal(s). VP1 N-terminus might serve as a lipolytic enzyme to breach the endosomal membrane during entry into host cell and might contribute to virus transport to the nucleus. This Neovison vison (American mink) protein is Capsid protein VP1.